The primary structure comprises 185 residues: Ribosome-recycling factor (185 aa).

This sequence belongs to the RRF family.

It localises to the cytoplasm. Its function is as follows. Responsible for the release of ribosomes from messenger RNA at the termination of protein biosynthesis. May increase the efficiency of translation by recycling ribosomes from one round of translation to another. The polypeptide is Ribosome-recycling factor (Shewanella oneidensis (strain ATCC 700550 / JCM 31522 / CIP 106686 / LMG 19005 / NCIMB 14063 / MR-1)).